Reading from the N-terminus, the 512-residue chain is Sodium-dependent phosphate transport protein 1, chloroplastic (512 aa).

The N-terminal 59 residues, 1–59 (MNARALLCSSNIHSLYTSNRPPEKTSSSRSLRNLKPSPKSLRVWIYPRNRSSVFRVLVR), are a transit peptide targeting the chloroplast. Helical transmembrane passes span 103–123 (WVIV…RVNM), 141–161 (VGLI…AGGI), 171–191 (VLGF…VAAK), 192–212 (LGLP…GVAM), 234–254 (LVYS…PFLI), 257–277 (FGWP…LTLW), 323–343 (VWAL…LLTW), 361–381 (LLSV…GWIA), 401–421 (IGFL…SPTM), 453–473 (GVLL…GTAA), and 486–506 (VFTI…LFST).

It belongs to the major facilitator superfamily. Sodium/anion cotransporter (TC 2.A.1.14) family. Expressed in flower buds, sepals of mature flowers and mature leaves, less in senescent leaves and at low levels in roots.

The protein localises to the plastid. Its subcellular location is the chloroplast thylakoid membrane. Its function is as follows. Specific for inorganic phosphate transport across the thylakoid membrane in a sodium dependent manner. Binds glutamate but cannot transport it. May act as an ascorbate transporter at the thylakoid membrane. The sequence is that of Sodium-dependent phosphate transport protein 1, chloroplastic (ANTR1) from Arabidopsis thaliana (Mouse-ear cress).